Reading from the N-terminus, the 452-residue chain is General transcription and DNA repair factor IIH subunit TFB2 (452 aa).

This sequence belongs to the TFB2 family. Component of the 7-subunit TFIIH core complex composed of XPB, XPD, TFB1/GTF2H1, GTF2H2/P44, TFB4/GTF2H3, TFB2/GTF2H4 and TFB5/GTF2H5, which is active in NER. The core complex associates with the 3-subunit CDK-activating kinase (CAK) module composed of CYCH1/cyclin H1, CDKD and MAT1/At4g30820 to form the 10-subunit holoenzyme (holo-TFIIH) active in transcription.

The protein localises to the nucleus. Component of the general transcription and DNA repair factor IIH (TFIIH) core complex, which is involved in general and transcription-coupled nucleotide excision repair (NER) of damaged DNA and, when complexed to CAK, in RNA transcription by RNA polymerase II. In NER, TFIIH acts by opening DNA around the lesion to allow the excision of the damaged oligonucleotide and its replacement by a new DNA fragment. In transcription, TFIIH has an essential role in transcription initiation. When the pre-initiation complex (PIC) has been established, TFIIH is required for promoter opening and promoter escape. Phosphorylation of the C-terminal tail (CTD) of the largest subunit of RNA polymerase II by the kinase module CAK controls the initiation of transcription. The sequence is that of General transcription and DNA repair factor IIH subunit TFB2 from Arabidopsis thaliana (Mouse-ear cress).